The primary structure comprises 266 residues: UPF0246 protein PHZ_c0561 (266 aa).

Residues 245–266 (DEEFTFARPQPPPPAASRNKED) form a disordered region.

The protein belongs to the UPF0246 family.

The sequence is that of UPF0246 protein PHZ_c0561 from Phenylobacterium zucineum (strain HLK1).